We begin with the raw amino-acid sequence, 358 residues long: RNA demethylase ALKBH5 (358 aa).

Positions 1 to 50 (MSATYTDLREKLQSLYRDSPKEVRKRKQPTSDTEEEEAASEPEEEEEARK) are disordered. Residues 7 to 22 (DLREKLQSLYRDSPKE) are compositionally biased toward basic and acidic residues. Acidic residues predominate over residues 32–46 (DTEEEEAASEPEEEE). Tyr105 is a catalytic residue. 2-oxoglutarate contacts are provided by Asn159, Tyr161, His170, His232, and Arg243. Cys196 and Cys233 are joined by a disulfide. 2 disordered regions span residues 259–312 (EMKS…RRSV) and 334–358 (DYVDTYTETGEDDGSPVRKVKMRRH). The span at 262 to 278 (SLSSSYQPERLQGSNRQ) shows a compositional bias: polar residues. Residues 279-288 (HILKPKRSHR) show a composition bias toward basic residues. Basic and acidic residues predominate over residues 289-310 (KADPDAAHRPRILEMDKEENRR).

Belongs to the alkB family. As to quaternary structure, monomer. Fe(2+) serves as cofactor.

The protein resides in the nucleus speckle. The enzyme catalyses an N(6)-methyladenosine in mRNA + 2-oxoglutarate + O2 = an adenosine in mRNA + formaldehyde + succinate + CO2. Functionally, dioxygenase that specifically demethylates N(6)-methyladenosine (m6A) RNA, the most prevalent internal modification of messenger RNA (mRNA) in higher eukaryotes. Demethylates RNA by oxidative demethylation, which requires molecular oxygen, alpha-ketoglutarate and iron. Demethylation of m6A mRNA affects mRNA processing, translation and export. This Xenopus tropicalis (Western clawed frog) protein is RNA demethylase ALKBH5 (alkbh5).